Consider the following 610-residue polypeptide: Myosin light chain kinase 2, skeletal/cardiac muscle (610 aa).

Disordered regions lie at residues 1-168 (MATE…HSPS) and 196-240 (VSET…DTSQ). The residue at position 2 (A2) is an N-acetylalanine. 2 stretches are compositionally biased toward basic and acidic residues: residues 32–63 (SEKE…KKNP) and 70–82 (KTPE…KKGD). Over residues 94-109 (SGEGDGGGGPAEGGTG) the composition is skewed to gly residues. A compositionally biased stretch (basic and acidic residues) spans 141-157 (GEAKAGKKAAECREAGR). Phosphoserine is present on residues S160, S166, and S168. The Protein kinase domain occupies 299 to 554 (MNSKEALGGG…AEQCLAHPWL (256 aa)). Residues 305-313 (LGGGKFGAV) and K328 contribute to the ATP site. D420 functions as the Proton acceptor in the catalytic mechanism. The residue at position 459 (T459) is a Phosphothreonine. The tract at residues 588 to 600 (IAVSAANRFKKIS) is calmodulin-binding.

The protein belongs to the protein kinase superfamily. CAMK Ser/Thr protein kinase family. As to quaternary structure, may interact with centrin.

It is found in the cytoplasm. The catalysed reaction is L-seryl-[myosin light chain] + ATP = O-phospho-L-seryl-[myosin light chain] + ADP + H(+). It carries out the reaction L-threonyl-[myosin light chain] + ATP = O-phospho-L-threonyl-[myosin light chain] + ADP + H(+). Its function is as follows. Implicated in the level of global muscle contraction and cardiac function. Phosphorylates a specific serine in the N-terminus of a myosin light chain. This is Myosin light chain kinase 2, skeletal/cardiac muscle (Mylk2) from Rattus norvegicus (Rat).